The primary structure comprises 193 residues: Phosphoheptose isomerase (193 aa).

An SIS domain is found at 37-193 (LADSFKAGGK…QLIEKEMVKA (157 aa)). 52–54 (NGG) is a binding site for substrate. The Zn(2+) site is built by H61 and E65. Substrate contacts are provided by residues E65, 93–94 (ND), 119–121 (STS), S124, and Q172. Residues Q172 and H180 each coordinate Zn(2+).

This sequence belongs to the SIS family. GmhA subfamily. Homotetramer. Zn(2+) is required as a cofactor.

It is found in the cytoplasm. The enzyme catalyses 2 D-sedoheptulose 7-phosphate = D-glycero-alpha-D-manno-heptose 7-phosphate + D-glycero-beta-D-manno-heptose 7-phosphate. It participates in carbohydrate biosynthesis; D-glycero-D-manno-heptose 7-phosphate biosynthesis; D-glycero-alpha-D-manno-heptose 7-phosphate and D-glycero-beta-D-manno-heptose 7-phosphate from sedoheptulose 7-phosphate: step 1/1. It functions in the pathway bacterial outer membrane biogenesis; LPS core biosynthesis. In terms of biological role, catalyzes the isomerization of sedoheptulose 7-phosphate in D-glycero-D-manno-heptose 7-phosphate. The polypeptide is Phosphoheptose isomerase (Yersinia pestis).